Reading from the N-terminus, the 305-residue chain is MSKKLTFQEIILTLQQYWNDQGCMLMQAYDNEKGAGTMSPYTFLRAIGPEPWNAAYVEPSRRPADGRYGENPNRLYQHHQFQVVMKPSPSNIQELYLQSLELLGINALEHDIRFVEDNWENPSTGSAGLGWEVWLDGMEITQFTYFQQVGGLATQPVTAEVTYGLERLASYIQEVDSVYDIEWAPGVKYGEIFRQPEYEHSKYSFEISNQEMLLENFEKFEAEAKRCLEGSLVHPAYDYILKCSHTFNLLDARGAVSVTERAGYIARIRNLARVAAKTFVAERRRLGYPLLDEMTREKLLAEEEA.

The protein belongs to the class-II aminoacyl-tRNA synthetase family. In terms of assembly, tetramer of two alpha and two beta subunits.

The protein localises to the cytoplasm. It carries out the reaction tRNA(Gly) + glycine + ATP = glycyl-tRNA(Gly) + AMP + diphosphate. The sequence is that of Glycine--tRNA ligase alpha subunit from Streptococcus mutans serotype c (strain ATCC 700610 / UA159).